Here is a 621-residue protein sequence, read N- to C-terminus: tRNA uridine 5-carboxymethylaminomethyl modification enzyme MnmG (621 aa).

Gly-8–Gly-13 is a binding site for FAD. Gly-269–Phe-283 serves as a coordination point for NAD(+).

This sequence belongs to the MnmG family. As to quaternary structure, homodimer. Heterotetramer of two MnmE and two MnmG subunits. The cofactor is FAD.

It localises to the cytoplasm. Its function is as follows. NAD-binding protein involved in the addition of a carboxymethylaminomethyl (cmnm) group at the wobble position (U34) of certain tRNAs, forming tRNA-cmnm(5)s(2)U34. This Chlorobium phaeovibrioides (strain DSM 265 / 1930) (Prosthecochloris vibrioformis (strain DSM 265)) protein is tRNA uridine 5-carboxymethylaminomethyl modification enzyme MnmG.